Here is a 654-residue protein sequence, read N- to C-terminus: Periplasmic beta-glucosidase/beta-xylosidase (654 aa).

The first 25 residues, 1–25 (MEKSATRQKALLIALPLLFSPLASA), serve as a signal peptide directing secretion. Active-site residues include D235 and D360.

It belongs to the glycosyl hydrolase 3 family.

Its subcellular location is the periplasm. The catalysed reaction is Hydrolysis of terminal, non-reducing beta-D-glucosyl residues with release of beta-D-glucose.. The enzyme catalyses Hydrolysis of (1-&gt;4)-beta-D-xylans, to remove successive D-xylose residues from the non-reducing termini.. In terms of biological role, exhibits both beta-glucosidase and beta-xylosidase activities. In Dickeya chrysanthemi (Pectobacterium chrysanthemi), this protein is Periplasmic beta-glucosidase/beta-xylosidase (bgxA).